The following is a 291-amino-acid chain: Small ribosomal subunit protein uS2 (291 aa).

A disordered region spans residues 241 to 270; it reads KREPRQINRPVMSSENQAEQQTSVANENVQ. Positions 251–270 are enriched in polar residues; it reads VMSSENQAEQQTSVANENVQ.

The protein belongs to the universal ribosomal protein uS2 family.

The polypeptide is Small ribosomal subunit protein uS2 (Mycoplasma capricolum subsp. capricolum (strain California kid / ATCC 27343 / NCTC 10154)).